Consider the following 468-residue polypeptide: MTDKNTSEQLWTGRFTEATDAFVEQFSASEHFDRRLYRQDIAGSMAHARMLAEVGVLTAEERDRIVDGLTRIREEIEHGQFQWSPKLEDVHMNIEKRLTDLIGEAGKKLHTGRSRNDQVATDIRLWLREAIDGILDELLRLQAGLVELAELEADTIMPGFTHMQVAQPVTFGHHLLAWYEMLVRDQGRLEDCRKRLNQMPLGCAALAGTSFPIDREQTCSELGFDRPTRNSLDSVSDRDFAIEFNAAAALVMTHLSRMAEEVILWASPHFGFIDLPDRFCTGSSIMPQKKNPDVAELVRGKTARVHGNLNALLVLMKGQPLAYNRDNQEDKEPLFDTADTLRDALTAFADMLPAMEVQREACYRAARAGFATATDLADYLVRKGVPFRDAHEIVGRAVRYASDEGRDLSELELDELQQFSGTISEDVFEVLTLEGSVAARNHLGGTAPAQVRARVAEARDRLRLLMGK.

It belongs to the lyase 1 family. Argininosuccinate lyase subfamily.

It is found in the cytoplasm. It catalyses the reaction 2-(N(omega)-L-arginino)succinate = fumarate + L-arginine. It participates in amino-acid biosynthesis; L-arginine biosynthesis; L-arginine from L-ornithine and carbamoyl phosphate: step 3/3. The sequence is that of Argininosuccinate lyase from Alkalilimnicola ehrlichii (strain ATCC BAA-1101 / DSM 17681 / MLHE-1).